The primary structure comprises 388 residues: Succinate--CoA ligase [ADP-forming] subunit beta (388 aa).

An ATP-grasp domain is found at 9 to 244 (KEIFRSMGVA…LEEEDPKEIE (236 aa)). Residues Lys46, 53 to 55 (GRG), Glu99, Cys102, and Glu107 contribute to the ATP site. Residues Asn199 and Asp213 each coordinate Mg(2+). Substrate-binding positions include Asn264 and 321 to 323 (GIM).

It belongs to the succinate/malate CoA ligase beta subunit family. Heterotetramer of two alpha and two beta subunits. It depends on Mg(2+) as a cofactor.

It carries out the reaction succinate + ATP + CoA = succinyl-CoA + ADP + phosphate. The catalysed reaction is GTP + succinate + CoA = succinyl-CoA + GDP + phosphate. It participates in carbohydrate metabolism; tricarboxylic acid cycle; succinate from succinyl-CoA (ligase route): step 1/1. Its function is as follows. Succinyl-CoA synthetase functions in the citric acid cycle (TCA), coupling the hydrolysis of succinyl-CoA to the synthesis of either ATP or GTP and thus represents the only step of substrate-level phosphorylation in the TCA. The beta subunit provides nucleotide specificity of the enzyme and binds the substrate succinate, while the binding sites for coenzyme A and phosphate are found in the alpha subunit. The chain is Succinate--CoA ligase [ADP-forming] subunit beta from Staphylococcus aureus (strain bovine RF122 / ET3-1).